Reading from the N-terminus, the 517-residue chain is Bifunctional purine biosynthesis protein PurH (517 aa).

The 145-residue stretch at 1 to 145 folds into the MGS-like domain; sequence MSPLALVSVS…KNHKDVSVLV (145 aa).

This sequence belongs to the PurH family.

The catalysed reaction is (6R)-10-formyltetrahydrofolate + 5-amino-1-(5-phospho-beta-D-ribosyl)imidazole-4-carboxamide = 5-formamido-1-(5-phospho-D-ribosyl)imidazole-4-carboxamide + (6S)-5,6,7,8-tetrahydrofolate. The enzyme catalyses IMP + H2O = 5-formamido-1-(5-phospho-D-ribosyl)imidazole-4-carboxamide. It functions in the pathway purine metabolism; IMP biosynthesis via de novo pathway; 5-formamido-1-(5-phospho-D-ribosyl)imidazole-4-carboxamide from 5-amino-1-(5-phospho-D-ribosyl)imidazole-4-carboxamide (10-formyl THF route): step 1/1. It participates in purine metabolism; IMP biosynthesis via de novo pathway; IMP from 5-formamido-1-(5-phospho-D-ribosyl)imidazole-4-carboxamide: step 1/1. The protein is Bifunctional purine biosynthesis protein PurH of Prochlorococcus marinus (strain MIT 9312).